The sequence spans 40 residues: MITDVQLAIFSNVLGVFLFLLVVAYHYINANTGKSSIKNK.

Over 1-4 (MITD) the chain is Lumenal. Residues 5-25 (VQLAIFSNVLGVFLFLLVVAY) form a helical membrane-spanning segment. Residues 26–40 (HYINANTGKSSIKNK) lie on the Cytoplasmic side of the membrane.

The protein belongs to the OST4 family. Component of the oligosaccharyltransferase (OST) complex.

The protein localises to the endoplasmic reticulum membrane. In terms of biological role, subunit of the oligosaccharyl transferase (OST) complex that catalyzes the initial transfer of a defined glycan (Glc(3)Man(9)GlcNAc(2) in eukaryotes) from the lipid carrier dolichol-pyrophosphate to an asparagine residue within an Asn-X-Ser/Thr consensus motif in nascent polypeptide chains, the first step in protein N-glycosylation. N-glycosylation occurs cotranslationally and the complex associates with the Sec61 complex at the channel-forming translocon complex that mediates protein translocation across the endoplasmic reticulum (ER). All subunits are required for a maximal enzyme activity. This chain is Dolichyl-diphosphooligosaccharide--protein glycosyltransferase subunit 4, found in Drosophila mojavensis (Fruit fly).